Consider the following 1359-residue polypeptide: Transcriptional regulator ATRX homolog (1359 aa).

Residues 1–402 (MRVGVSESED…RAEKERRKRL (402 aa)) are disordered. Residues 11–49 (SDGHVIEDEDLEMARQIENERKEKRAQKLKEKREREGKP) show a composition bias toward basic and acidic residues. A compositionally biased stretch (basic residues) spans 50–61 (PPKKRPAKKRKA). Acidic residues predominate over residues 64–73 (SEEDDDDEEE). 6 stretches are compositionally biased toward basic residues: residues 77 to 86 (KSSKKSRKRA), 103 to 123 (KSKS…KKRT), 139 to 149 (KSKKKSKKTKK), 165 to 177 (VKKS…KSVK), 194 to 204 (KKSKKGLKKKA), and 219 to 229 (KKSKKKSKKVV). Over residues 257–271 (ESSESEKSDEEEEEK) the composition is skewed to acidic residues. The span at 321 to 336 (KDQKSESEASDVEEKV) shows a compositional bias: basic and acidic residues. Residues 347–357 (SESGSDSSEGS) are compositionally biased toward low complexity. A compositionally biased stretch (basic residues) spans 362–376 (RKSKKKEKPEKKKKG). Residues 383–397 (KLQKETIDAERAEKE) are compositionally biased toward basic and acidic residues. A Helicase ATP-binding domain is found at 483–685 (DRLDTEGSGG…HCMVNFVKPG (203 aa)). An ATP-binding site is contributed by 496–503 (HCMGLGKT). The DEAH box signature appears at 636 to 639 (DEAH). Residues 809–891 (RVMREDAEEE…NSDDEDEEDG (83 aa)) form a disordered region. The span at 814 to 832 (DAEEEADFIDDGDGSESES) shows a compositional bias: acidic residues. Over residues 833–847 (EGSFKSGSESDSGKS) the composition is skewed to low complexity. The 184-residue stretch at 951–1134 (LLVEIIKKCE…EAQIQRHYLG (184 aa)) folds into the Helicase C-terminal domain.

This sequence belongs to the SNF2/RAD54 helicase family.

The protein resides in the nucleus. The enzyme catalyses ATP + H2O = ADP + phosphate + H(+). Functionally, required for embryonic development and gonadogenesis. Also, functions redundantly with the transcriptional repressor lin-35 to regulate somatic gonad development. In Caenorhabditis elegans, this protein is Transcriptional regulator ATRX homolog.